Consider the following 230-residue polypeptide: Sugar fermentation stimulation protein homolog (230 aa).

This sequence belongs to the SfsA family.

The chain is Sugar fermentation stimulation protein homolog from Clostridium perfringens (strain ATCC 13124 / DSM 756 / JCM 1290 / NCIMB 6125 / NCTC 8237 / Type A).